Consider the following 38-residue polypeptide: Photosystem II reaction center protein L (38 aa).

A helical transmembrane segment spans residues 17–37 (SLFWGLLLIFVLAVLFSSYFF).

Belongs to the PsbL family. In terms of assembly, PSII is composed of 1 copy each of membrane proteins PsbA, PsbB, PsbC, PsbD, PsbE, PsbF, PsbH, PsbI, PsbJ, PsbK, PsbL, PsbM, PsbT, PsbX, PsbY, PsbZ, Psb30/Ycf12, at least 3 peripheral proteins of the oxygen-evolving complex and a large number of cofactors. It forms dimeric complexes.

Its subcellular location is the plastid. The protein localises to the chloroplast thylakoid membrane. In terms of biological role, one of the components of the core complex of photosystem II (PSII). PSII is a light-driven water:plastoquinone oxidoreductase that uses light energy to abstract electrons from H(2)O, generating O(2) and a proton gradient subsequently used for ATP formation. It consists of a core antenna complex that captures photons, and an electron transfer chain that converts photonic excitation into a charge separation. This subunit is found at the monomer-monomer interface and is required for correct PSII assembly and/or dimerization. The polypeptide is Photosystem II reaction center protein L (Rhodomonas salina (Cryptomonas salina)).